We begin with the raw amino-acid sequence, 421 residues long: Trimethyllysine dioxygenase, mitochondrial (421 aa).

Residues 1-15 constitute a mitochondrion transit peptide; that stretch reads MWYHKLLHQQSRLQN. Lys-179 and Lys-236 each carry N6-acetyllysine. 3 residues coordinate Fe cation: His-242, Asp-244, and His-389.

The protein belongs to the gamma-BBH/TMLD family. In terms of assembly, homodimer. Fe(2+) serves as cofactor. It depends on L-ascorbate as a cofactor.

It is found in the mitochondrion matrix. The catalysed reaction is N(6),N(6),N(6)-trimethyl-L-lysine + 2-oxoglutarate + O2 = (3S)-3-hydroxy-N(6),N(6),N(6)-trimethyl-L-lysine + succinate + CO2. It functions in the pathway amine and polyamine biosynthesis; carnitine biosynthesis. In terms of biological role, converts trimethyllysine (TML) into hydroxytrimethyllysine (HTML). This Rattus norvegicus (Rat) protein is Trimethyllysine dioxygenase, mitochondrial (Tmlhe).